The primary structure comprises 193 residues: Crossover junction endodeoxyribonuclease RuvC (193 aa).

Active-site residues include Asp-7, Glu-68, and Asp-141. Mg(2+) contacts are provided by Asp-7, Glu-68, and Asp-141.

This sequence belongs to the RuvC family. In terms of assembly, homodimer which binds Holliday junction (HJ) DNA. The HJ becomes 2-fold symmetrical on binding to RuvC with unstacked arms; it has a different conformation from HJ DNA in complex with RuvA. In the full resolvosome a probable DNA-RuvA(4)-RuvB(12)-RuvC(2) complex forms which resolves the HJ. Requires Mg(2+) as cofactor.

The protein resides in the cytoplasm. The enzyme catalyses Endonucleolytic cleavage at a junction such as a reciprocal single-stranded crossover between two homologous DNA duplexes (Holliday junction).. In terms of biological role, the RuvA-RuvB-RuvC complex processes Holliday junction (HJ) DNA during genetic recombination and DNA repair. Endonuclease that resolves HJ intermediates. Cleaves cruciform DNA by making single-stranded nicks across the HJ at symmetrical positions within the homologous arms, yielding a 5'-phosphate and a 3'-hydroxyl group; requires a central core of homology in the junction. The consensus cleavage sequence is 5'-(A/T)TT(C/G)-3'. Cleavage occurs on the 3'-side of the TT dinucleotide at the point of strand exchange. HJ branch migration catalyzed by RuvA-RuvB allows RuvC to scan DNA until it finds its consensus sequence, where it cleaves and resolves the cruciform DNA. This is Crossover junction endodeoxyribonuclease RuvC from Renibacterium salmoninarum (strain ATCC 33209 / DSM 20767 / JCM 11484 / NBRC 15589 / NCIMB 2235).